A 572-amino-acid chain; its full sequence is MRTSQYLLSTLKETPADAEVISHQLMLRAGMIRKLASGLYTWLPTGLRVLKKVENIVREEMNNAGAIEVSMPVVQPADLWQESGRWEQYGPELLRFVDRGERPFVLGPTHEEVITDLVRNELSSYKQLPLNFFQIQTKFRDEVRPRFGVMRSREFLMKDAYSFHTSQESLQETYDAMYAAYSRIFSRMGLDFRAVQADTGSIGGNASHEFQVLAQSGEDDIVFSDVSDYAANIELAEAIAPQTPRAAATQEMTLVDTPNAKTIAELVEQFNLPIEKTVKTLLVKAVKDSKSPLVALLVRGDHELNEVKAEKLPQVASPLTFATEEEIRAVINAGPGSLGPVNMPIPVIIDRTVAAMSDFAAGANIDGKHYFGINWDRDVATPVVADIRNVVAGDPSPDGQGTLLIKRGIEVGHIFQLGTKYSEALKASVQGEDGRNQILTMGCYGIGVTRVVAAAIEQNFDERGIVWPDAIAPFQVAILPMNMHKSFRVQELAEKLYSELRAQGIEVLMDDRKERPGVMFADMELIGIPHTIVIGDRNLDNDDIEYKYRRSGEKSLIKTGDIVDYLVKAIKG.

The protein belongs to the class-II aminoacyl-tRNA synthetase family. ProS type 1 subfamily. In terms of assembly, homodimer.

It localises to the cytoplasm. The enzyme catalyses tRNA(Pro) + L-proline + ATP = L-prolyl-tRNA(Pro) + AMP + diphosphate. Functionally, catalyzes the attachment of proline to tRNA(Pro) in a two-step reaction: proline is first activated by ATP to form Pro-AMP and then transferred to the acceptor end of tRNA(Pro). As ProRS can inadvertently accommodate and process non-cognate amino acids such as alanine and cysteine, to avoid such errors it has two additional distinct editing activities against alanine. One activity is designated as 'pretransfer' editing and involves the tRNA(Pro)-independent hydrolysis of activated Ala-AMP. The other activity is designated 'posttransfer' editing and involves deacylation of mischarged Ala-tRNA(Pro). The misacylated Cys-tRNA(Pro) is not edited by ProRS. This chain is Proline--tRNA ligase, found in Salmonella newport (strain SL254).